The primary structure comprises 72 residues: uncharacterized protein (72 aa).

This is an uncharacterized protein from Archaeoglobus fulgidus (strain ATCC 49558 / DSM 4304 / JCM 9628 / NBRC 100126 / VC-16).